A 518-amino-acid chain; its full sequence is Fusicoccin H C-9 hydroxylase (518 aa).

Residues 12-29 (HLLLISTVIAVLAALIVS) form a helical membrane-spanning segment. Residues Asn-81 and Asn-168 are each glycosylated (N-linked (GlcNAc...) asparagine). Cys-456 provides a ligand contact to heme.

Belongs to the cytochrome P450 family. The cofactor is heme.

The protein resides in the membrane. The protein operates within mycotoxin biosynthesis. Cytochrome P450 monooxygenase; part of the 2 gene clusters that mediate the biosynthesis of fusicoccins, diterpene glucosides that display phytohormone-like activity and function as potent activators of plasma membrane H(+)-ATPases in plants by modifying 14-3-3 proteins and cause the plant disease constriction canker. The first step in the pathway is performed by the fusicoccadiene synthase PaFS that possesses both prenyl transferase and terpene cyclase activity, converting isopentenyl diphosphate and dimethylallyl diphosphate into geranylgeranyl diphosphate (GGDP) and successively converting GGDP into fusicocca-2,10(14)-diene, a precursor for fusicoccin H. The second step is the oxidation at the C-8 position by the cytochrome P450 monooxygenase PaP450-2 to yield fusicocca-2,10(14)-diene-8-beta-ol. The cytochrome P450 monooxygenase PaP450-1 then catalyzes the hydroxylation at the C-16 position to produce fusicocca-2,10(14)-diene-8-beta,16-diol. The dioxygenase fc-dox then catalyzes the 16-oxydation of fusicocca-2,10(14)-diene-8-beta,16-diol to yield an aldehyde (8-beta-hydroxyfusicocca-1,10(14)-dien-16-al). The short-chain dehydrogenase/reductase fc-sdr catalyzes the reduction of the aldehyde to yield fusicocca-1,10(14)-diene-8-beta,16-diol. The next step is the hydroxylation at C-9 performed by the cytochrome P450 monooxygenase PaP450-3 that leads to fusicoccin H aglycon which is glycosylated to fusicoccin H by the O-glycosyltransferase PaGT. Hydroxylation at C-12 by the cytochrome P450 monooxygenase PaP450-4 leads then to the production of fusicoccin Q and is followed by methylation by the O-methyltransferase PaMT to yield fusicoccin P. Fusicoccin P is further converted to fusicoccin J via prenylation by the O-glucose prenyltransferase PaPT. Cytochrome P450 monooxygenase PaP450-5 then performs hydroxylation at C-19 to yield dideacetyl-fusicoccin A which is acetylated to 3'-O-deacetyl-fusicoccin A by the O-acetyltransferase PaAT-2. Finally, a another acetylation by the O-acetyltransferase PaAT-1 yields fusicoccin A. The chain is Fusicoccin H C-9 hydroxylase from Phomopsis amygdali (Fusicoccum amygdali).